The chain runs to 126 residues: UPF0325 protein PBPRA2971 (126 aa).

The protein belongs to the UPF0325 family.

The polypeptide is UPF0325 protein PBPRA2971 (Photobacterium profundum (strain SS9)).